Here is a 94-residue protein sequence, read N- to C-terminus: Small ribosomal subunit protein uS19 (94 aa).

It belongs to the universal ribosomal protein uS19 family.

In terms of biological role, protein S19 forms a complex with S13 that binds strongly to the 16S ribosomal RNA. In Finegoldia magna (strain ATCC 29328 / DSM 20472 / WAL 2508) (Peptostreptococcus magnus), this protein is Small ribosomal subunit protein uS19.